Reading from the N-terminus, the 445-residue chain is TNF receptor-associated factor family protein DDB_G0290971 (445 aa).

The RING-type; degenerate zinc finger occupies 23 to 67 (CPICFDLYYSSSSKKEVFQCRDGHLACKSCWSDSLLNKKECMICR). 2 TRAF-type zinc fingers span residues 133–186 (KHQV…QLDA) and 186–242 (AHAL…ESID). Residues 269–307 (QLELVECKNQIYQINNKYEKLLERVIKLEQLSMDASNKL) adopt a coiled-coil conformation. An MATH domain is found at 314–441 (KNSIIFATFS…EDKLVIGLRI (128 aa)).

Belongs to the TNF receptor-associated factor family. A subfamily.

The protein localises to the cytoplasm. Its function is as follows. Probable adapter protein and signal transducer that links members of the tumor necrosis factor receptor family to different signaling pathways by association with the receptor cytoplasmic domain and kinases. This is TNF receptor-associated factor family protein DDB_G0290971 from Dictyostelium discoideum (Social amoeba).